Consider the following 447-residue polypeptide: Crotonyl-CoA reductase (447 aa).

The protein belongs to the zinc-containing alcohol dehydrogenase family. Crotonyl-CoA carboxylase/reductase subfamily. Homodimer.

The enzyme catalyses butanoyl-CoA + NADP(+) = (2E)-butenoyl-CoA + NADPH + H(+). Its activity is regulated as follows. Inhibited by divalent cations (30-100%), beta-chloromercuribenzoate (85%), iodoacetamide (40%) and N-ethylmaleamide (80%). The presence of CoA thioesters containing 12-20 carbon atoms results in inhibition of enzyme activity. The greatest degree of inhibition is observed in the presence of palmitoyl-CoA and myristoyl-CoA. The branched-chain fatty acids, isopalmitoyl-CoA and isomyristoyl-CoA are less effective inhibitors of the crotonyl-CoA reductase. Concentrations of NADPH above 200 uM lead to inhibition of enzyme activity. In terms of biological role, may play a role in supplying butyryl-CoA for straight-chain fatty acid biosynthesis. Catalyzes the conversion of crotonyl-CoA to butyryl-CoA. It shows a high substrate specificity for crotonyl-CoA, a short-chain-length (C4), but no measurable activity is observed with shorter (C3) or longer-chain-length enoyl-CoA thioesters. The polypeptide is Crotonyl-CoA reductase (ccr) (Streptomyces collinus).